The chain runs to 364 residues: Chorismate synthase (364 aa).

NADP(+) contacts are provided by Arg48 and Arg54. FMN contacts are provided by residues 125 to 127 (RSS), 238 to 239 (NA), Gly278, 293 to 297 (KPTSS), and Arg319.

It belongs to the chorismate synthase family. In terms of assembly, homotetramer. The cofactor is FMNH2.

It catalyses the reaction 5-O-(1-carboxyvinyl)-3-phosphoshikimate = chorismate + phosphate. Its pathway is metabolic intermediate biosynthesis; chorismate biosynthesis; chorismate from D-erythrose 4-phosphate and phosphoenolpyruvate: step 7/7. In terms of biological role, catalyzes the anti-1,4-elimination of the C-3 phosphate and the C-6 proR hydrogen from 5-enolpyruvylshikimate-3-phosphate (EPSP) to yield chorismate, which is the branch point compound that serves as the starting substrate for the three terminal pathways of aromatic amino acid biosynthesis. This reaction introduces a second double bond into the aromatic ring system. This is Chorismate synthase from Shewanella frigidimarina (strain NCIMB 400).